The primary structure comprises 160 residues: Large ribosomal subunit protein eL21B (160 aa).

Lys-32 is covalently cross-linked (Glycyl lysine isopeptide (Lys-Gly) (interchain with G-Cter in ubiquitin)).

The protein belongs to the eukaryotic ribosomal protein eL21 family. As to quaternary structure, component of the large ribosomal subunit (LSU). Mature yeast ribosomes consist of a small (40S) and a large (60S) subunit. The 40S small subunit contains 1 molecule of ribosomal RNA (18S rRNA) and 33 different proteins (encoded by 57 genes). The large 60S subunit contains 3 rRNA molecules (25S, 5.8S and 5S rRNA) and 46 different proteins (encoded by 81 genes).

It is found in the cytoplasm. Component of the ribosome, a large ribonucleoprotein complex responsible for the synthesis of proteins in the cell. The small ribosomal subunit (SSU) binds messenger RNAs (mRNAs) and translates the encoded message by selecting cognate aminoacyl-transfer RNA (tRNA) molecules. The large subunit (LSU) contains the ribosomal catalytic site termed the peptidyl transferase center (PTC), which catalyzes the formation of peptide bonds, thereby polymerizing the amino acids delivered by tRNAs into a polypeptide chain. The nascent polypeptides leave the ribosome through a tunnel in the LSU and interact with protein factors that function in enzymatic processing, targeting, and the membrane insertion of nascent chains at the exit of the ribosomal tunnel. This is Large ribosomal subunit protein eL21B from Saccharomyces cerevisiae (strain ATCC 204508 / S288c) (Baker's yeast).